The sequence spans 395 residues: Bifunctional fatty acid conjugase/Delta(12)-oleate desaturase (395 aa).

2 consecutive transmembrane segments (helical) span residues 73–93 and 97–117; these read FALAFLFYHSAVTYIPLLPKP and MAWPVYWFLQGSNMLGIWVIA. Positions 118–122 match the Histidine box-1 motif; the sequence is HECGH. Residues 130–150 traverse the membrane as a helical segment; that stretch reads WVNDAVGFFLHTSLLVPYFPF. Residues 154–158 carry the Histidine box-2 motif; that stretch reads HRRHH. The next 3 membrane-spanning stretches (helical) occupy residues 192–212, 236–256, and 264–284; these read VLTLTLTLLVGWPSYLAFNAS, FWVHVSNIGILAIYYILYRLA, and LLSIYGVPVLILNAFVVLITF. The Histidine box-3 motif lies at 328–332; sequence HVIHH.

This sequence belongs to the fatty acid desaturase type 1 family.

The protein resides in the membrane. The catalysed reaction is a (9Z,12Z)-octadecadienoyl-containing glycerolipid + 2 Fe(II)-[cytochrome b5] + O2 + 2 H(+) = a (9Z,11E,13Z)-octadeca-9,11,13-trienoyl-containing glycerolipid + 2 Fe(III)-[cytochrome b5] + 2 H2O. It functions in the pathway lipid metabolism; polyunsaturated fatty acid biosynthesis. Functionally, converts a single cis double bond at position 12 of linoleate incorporated into phosphatidylcholine into conjugated 11-trans and 13-cis double bonds. Produces punicic acid (18:3(9Z,11E,13Z)) from linoleic acid and conjugated octadecatetraenoic fatty acid from gamma-linolenic acid. No activity with cis- and trans-vaccenic acid, alpha-linolenic acid or homo-gamma-linolenic acid. 16:2(9Z,12Z), 18:3(9Z,12Z,15Z) and 18:2(9Z,12Z) are substrates for the conjugase to form trans-Delta(11) and cis-Delta(13) double bonds. No activity on the cis-Delta(9) double bonds of oleic and palmitoleic acids. The chain is Bifunctional fatty acid conjugase/Delta(12)-oleate desaturase from Punica granatum (Pomegranate).